The chain runs to 327 residues: Malate dehydrogenase (327 aa).

NAD(+)-binding positions include 20–25 and Asp-44; that span reads GAGRVG. Residues Arg-93 and Arg-99 each coordinate substrate. NAD(+)-binding positions include Asn-106 and 129 to 131; that span reads VTN. Substrate-binding residues include Asn-131 and Arg-162. His-186 (proton acceptor) is an active-site residue.

This sequence belongs to the LDH/MDH superfamily. MDH type 3 family.

It catalyses the reaction (S)-malate + NAD(+) = oxaloacetate + NADH + H(+). Its function is as follows. Catalyzes the reversible oxidation of malate to oxaloacetate. The protein is Malate dehydrogenase of Nostoc punctiforme (strain ATCC 29133 / PCC 73102).